Reading from the N-terminus, the 160-residue chain is SsrA-binding protein (160 aa).

It belongs to the SmpB family.

The protein resides in the cytoplasm. Functionally, required for rescue of stalled ribosomes mediated by trans-translation. Binds to transfer-messenger RNA (tmRNA), required for stable association of tmRNA with ribosomes. tmRNA and SmpB together mimic tRNA shape, replacing the anticodon stem-loop with SmpB. tmRNA is encoded by the ssrA gene; the 2 termini fold to resemble tRNA(Ala) and it encodes a 'tag peptide', a short internal open reading frame. During trans-translation Ala-aminoacylated tmRNA acts like a tRNA, entering the A-site of stalled ribosomes, displacing the stalled mRNA. The ribosome then switches to translate the ORF on the tmRNA; the nascent peptide is terminated with the 'tag peptide' encoded by the tmRNA and targeted for degradation. The ribosome is freed to recommence translation, which seems to be the essential function of trans-translation. This is SsrA-binding protein from Pasteurella multocida (strain Pm70).